The sequence spans 553 residues: Solute carrier family 22 member 4 (553 aa).

The Cytoplasmic portion of the chain corresponds to 1 to 20 (MRDYDEVIAFLGEWGPFQRL). Residues 21-41 (IFFLLSASIIPNGFNGMSVVF) traverse the membrane as a helical segment. The Extracellular portion of the chain corresponds to 42 to 142 (LAGTPEHRCL…NLVCEDDWKT (101 aa)). N-linked (GlcNAc...) asparagine glycans are attached at residues N57, N64, and N91. Residues 143–163 (PLTTSLFFVGVLCGSFVSGQL) traverse the membrane as a helical segment. Topologically, residues 164–171 (SDRFGRKK) are cytoplasmic. A helical membrane pass occupies residues 172 to 192 (VLFATMAVQTGFSFVQIFSTN). Over 193-197 (WEMFT) the chain is Extracellular. The chain crosses the membrane as a helical span at residues 198–218 (VLFAIVGMGQISNYVVAFILG). 218–225 (GTEILSKS) is a binding site for ATP. Topologically, residues 219-232 (TEILSKSVRIIFST) are cytoplasmic. A helical membrane pass occupies residues 233–253 (LGVCTFFAIGYMVLPLFAYFI). Residues 254 to 257 (RDWR) are Extracellular-facing. The helical transmembrane segment at 258–278 (MLLLALTLPGLFCVPLWWFIP) threads the bilayer. Over 279–339 (ESPRWLISQR…IILDLFRTRN (61 aa)) the chain is Cytoplasmic. The chain crosses the membrane as a helical span at residues 340–360 (IATITVMAVMLWMLTSVGYFA). At 361–373 (LSLNVPNLHGDVY) the chain is on the extracellular side. Residues 374–394 (LNCFLSGLIEVPAYFTAWLLL) traverse the membrane as a helical segment. Residues 395–400 (RTLPRR) lie on the Cytoplasmic side of the membrane. Residues 401-421 (YIIAGVLFWGGGVLLLIQVVP) form a helical membrane-spanning segment. Topologically, residues 422–428 (EDYNFVS) are extracellular. The chain crosses the membrane as a helical span at residues 429–449 (IGLVMLGKFGITSAFSMLYVF). Over 450–462 (TAELYPTLVRNMA) the chain is Cytoplasmic. A helical membrane pass occupies residues 463 to 483 (VGITSMASRVGSIIAPYFVYL). Topologically, residues 484–488 (GAYNR) are extracellular. A helical membrane pass occupies residues 489 to 509 (LLPYILMGSLTVLIGIITLFF). At 510–553 (PESFGVTLPENLEQMQKVRGFRCGKKSTVSVDREESPKVLITAF) the chain is on the cytoplasmic side.

This sequence belongs to the major facilitator (TC 2.A.1) superfamily. Organic cation transporter (TC 2.A.1.19) family. In terms of assembly, interacts with PDZK1. Expressed in kidney. Expressed in small intestines. Expressed in liver in non-parenchymal liver tissue such as sinusoidal vessels. Weakly expressed in lung and brain. Expressed in testis and spleen. Expressed in heart.

Its subcellular location is the apical cell membrane. The protein localises to the mitochondrion membrane. It is found in the basal cell membrane. The catalysed reaction is ergothioneine(out) + Na(+)(out) = ergothioneine(in) + Na(+)(in). It carries out the reaction acetylcholine(in) = acetylcholine(out). The enzyme catalyses (R)-carnitine(out) + Na(+)(out) = (R)-carnitine(in) + Na(+)(in). It catalyses the reaction glycine betaine(out) + Na(+)(out) = glycine betaine(in) + Na(+)(in). With respect to regulation, allosterically activated by intracellular ATP. Its function is as follows. Transporter that mediates the transport of endogenous and microbial zwitterions and organic cations. Functions as a Na(+)-dependent and pH-dependent high affinity microbial symporter of potent food-derived antioxidant ergothioeine. Transports one sodium ion with one ergothioeine molecule. Involved in the absorption of ergothioneine from the luminal/apical side of the small intestine and renal tubular cells, and into non-parenchymal liver cells, thereby contributing to maintain steady-state ergothioneine level in the body. Also mediates the bidirectional transport of acetycholine, although the exact transport mechanism has not been fully identified yet. Most likely exports anti-inflammatory acetylcholine in non-neuronal tissues, thereby contributing to the non-neuronal cholinergic system. Displays a general physiological role linked to better survival by controlling inflammation and oxidative stress, which may be related to ergothioneine and acetycholine transports. May also function as a low-affinity Na(+)-dependent transporter of L-carnitine through the mitochondrial membrane, thereby maintaining intracellular carnitine homeostasis. May contribute to regulate the transport of cationic compounds in testis across the blood-testis-barrier. The sequence is that of Solute carrier family 22 member 4 from Mus musculus (Mouse).